Reading from the N-terminus, the 448-residue chain is UDP-N-acetylmuramoylalanine--D-glutamate ligase (448 aa).

116–122 (GSNAKST) is an ATP binding site.

Belongs to the MurCDEF family.

Its subcellular location is the cytoplasm. It carries out the reaction UDP-N-acetyl-alpha-D-muramoyl-L-alanine + D-glutamate + ATP = UDP-N-acetyl-alpha-D-muramoyl-L-alanyl-D-glutamate + ADP + phosphate + H(+). It participates in cell wall biogenesis; peptidoglycan biosynthesis. Functionally, cell wall formation. Catalyzes the addition of glutamate to the nucleotide precursor UDP-N-acetylmuramoyl-L-alanine (UMA). The polypeptide is UDP-N-acetylmuramoylalanine--D-glutamate ligase (Pseudomonas savastanoi pv. phaseolicola (strain 1448A / Race 6) (Pseudomonas syringae pv. phaseolicola (strain 1448A / Race 6))).